Reading from the N-terminus, the 318-residue chain is Beta-ketoacyl-[acyl-carrier-protein] synthase III (318 aa).

Residues cysteine 112 and histidine 245 contribute to the active site. The segment at 246–250 (QANLR) is ACP-binding. The active site involves asparagine 275.

Belongs to the thiolase-like superfamily. FabH family. As to quaternary structure, homodimer.

It is found in the cytoplasm. It carries out the reaction malonyl-[ACP] + acetyl-CoA + H(+) = 3-oxobutanoyl-[ACP] + CO2 + CoA. It functions in the pathway lipid metabolism; fatty acid biosynthesis. Catalyzes the condensation reaction of fatty acid synthesis by the addition to an acyl acceptor of two carbons from malonyl-ACP. Catalyzes the first condensation reaction which initiates fatty acid synthesis and may therefore play a role in governing the total rate of fatty acid production. Possesses both acetoacetyl-ACP synthase and acetyl transacylase activities. Its substrate specificity determines the biosynthesis of branched-chain and/or straight-chain of fatty acids. The sequence is that of Beta-ketoacyl-[acyl-carrier-protein] synthase III from Blochmanniella floridana.